The following is a 71-amino-acid chain: Large ribosomal subunit protein bL28 (71 aa).

The protein belongs to the bacterial ribosomal protein bL28 family.

This is Large ribosomal subunit protein bL28 from Finegoldia magna (strain ATCC 29328 / DSM 20472 / WAL 2508) (Peptostreptococcus magnus).